Reading from the N-terminus, the 261-residue chain is Imidazole glycerol phosphate synthase subunit HisF (261 aa).

Active-site residues include Asp-12 and Asp-131.

The protein belongs to the HisA/HisF family. As to quaternary structure, heterodimer of HisH and HisF.

The protein localises to the cytoplasm. The catalysed reaction is 5-[(5-phospho-1-deoxy-D-ribulos-1-ylimino)methylamino]-1-(5-phospho-beta-D-ribosyl)imidazole-4-carboxamide + L-glutamine = D-erythro-1-(imidazol-4-yl)glycerol 3-phosphate + 5-amino-1-(5-phospho-beta-D-ribosyl)imidazole-4-carboxamide + L-glutamate + H(+). It participates in amino-acid biosynthesis; L-histidine biosynthesis; L-histidine from 5-phospho-alpha-D-ribose 1-diphosphate: step 5/9. IGPS catalyzes the conversion of PRFAR and glutamine to IGP, AICAR and glutamate. The HisF subunit catalyzes the cyclization activity that produces IGP and AICAR from PRFAR using the ammonia provided by the HisH subunit. The chain is Imidazole glycerol phosphate synthase subunit HisF from Brucella anthropi (strain ATCC 49188 / DSM 6882 / CCUG 24695 / JCM 21032 / LMG 3331 / NBRC 15819 / NCTC 12168 / Alc 37) (Ochrobactrum anthropi).